The following is a 176-amino-acid chain: Heme oxygenase HutZ (176 aa).

His170 contacts heme.

Belongs to the heme oxygenase HugZ/HutZ family. In terms of assembly, homodimer. Interacts with HutX, leading to the transfer of the heme from HutX to apo-HutZ.

The enzyme catalyses heme b + 3 AH2 + 3 O2 + 2 H(+) = biliverdin IXbeta + CO + Fe(2+) + 3 A + 3 H2O. It carries out the reaction heme b + 3 AH2 + 3 O2 + 3 H(+) = biliverdin IXdelta + CO + Fe(2+) + 3 A + 3 H2O. Activity is pH-dependent. A proximal hydrogen bond between Asp-132 and the heme axial ligant His-170 is essential for heme degradation activity. Heme-degradation reaction is inhibited by iron chelators. Involved in heme degradation. Catalyzes the degradation of heme to biliverdin, with the release of iron. Forms biliverdin beta and delta. Binds heme with high efficiency. In Vibrio cholerae serotype O1 (strain ATCC 39315 / El Tor Inaba N16961), this protein is Heme oxygenase HutZ.